Here is a 372-residue protein sequence, read N- to C-terminus: Transaldolase (372 aa).

K140 (schiff-base intermediate with substrate) is an active-site residue.

This sequence belongs to the transaldolase family. Type 2 subfamily.

The protein resides in the cytoplasm. The catalysed reaction is D-sedoheptulose 7-phosphate + D-glyceraldehyde 3-phosphate = D-erythrose 4-phosphate + beta-D-fructose 6-phosphate. The protein operates within carbohydrate degradation; pentose phosphate pathway; D-glyceraldehyde 3-phosphate and beta-D-fructose 6-phosphate from D-ribose 5-phosphate and D-xylulose 5-phosphate (non-oxidative stage): step 2/3. In terms of biological role, transaldolase is important for the balance of metabolites in the pentose-phosphate pathway. In Acidothermus cellulolyticus (strain ATCC 43068 / DSM 8971 / 11B), this protein is Transaldolase.